The primary structure comprises 520 residues: Poly(A)-specific ribonuclease PNLDC1 (520 aa).

Mg(2+) contacts are provided by Asp17, Glu19, Asp260, and Asp354. Residues 495–515 (VNCLLQVCGIVTAWALLAFIL) form a helical membrane-spanning segment.

Belongs to the CAF1 family. Mg(2+) is required as a cofactor.

The protein resides in the endoplasmic reticulum membrane. The catalysed reaction is Exonucleolytic cleavage of poly(A) to 5'-AMP.. Functionally, 3'-exoribonuclease that has a preference for poly(A) tails of mRNAs, thereby efficiently degrading poly(A) tails. Exonucleolytic degradation of the poly(A) tail is often the first step in the decay of eukaryotic mRNAs and is also used to silence certain maternal mRNAs translationally during oocyte maturation and early embryonic development. May act as a regulator of multipotency in embryonic stem cells. Is a critical factor for proper spermatogenesis, involved in pre-piRNAs processing to generate mature piRNAs. The chain is Poly(A)-specific ribonuclease PNLDC1 from Homo sapiens (Human).